The primary structure comprises 182 residues: NAD(P)H-quinone oxidoreductase subunit J (182 aa).

The protein belongs to the complex I 30 kDa subunit family. In terms of assembly, NDH-1 can be composed of about 15 different subunits; different subcomplexes with different compositions have been identified which probably have different functions.

Its subcellular location is the cellular thylakoid membrane. It carries out the reaction a plastoquinone + NADH + (n+1) H(+)(in) = a plastoquinol + NAD(+) + n H(+)(out). The catalysed reaction is a plastoquinone + NADPH + (n+1) H(+)(in) = a plastoquinol + NADP(+) + n H(+)(out). NDH-1 shuttles electrons from an unknown electron donor, via FMN and iron-sulfur (Fe-S) centers, to quinones in the respiratory and/or the photosynthetic chain. The immediate electron acceptor for the enzyme in this species is believed to be plastoquinone. Couples the redox reaction to proton translocation, and thus conserves the redox energy in a proton gradient. Cyanobacterial NDH-1 also plays a role in inorganic carbon-concentration. This is NAD(P)H-quinone oxidoreductase subunit J from Synechococcus sp. (strain WH7803).